Here is a 258-residue protein sequence, read N- to C-terminus: Tryptophan synthase alpha chain (258 aa).

Active-site proton acceptor residues include Glu-52 and Asp-63.

It belongs to the TrpA family. In terms of assembly, tetramer of two alpha and two beta chains.

It carries out the reaction (1S,2R)-1-C-(indol-3-yl)glycerol 3-phosphate + L-serine = D-glyceraldehyde 3-phosphate + L-tryptophan + H2O. Its pathway is amino-acid biosynthesis; L-tryptophan biosynthesis; L-tryptophan from chorismate: step 5/5. In terms of biological role, the alpha subunit is responsible for the aldol cleavage of indoleglycerol phosphate to indole and glyceraldehyde 3-phosphate. This Streptococcus pneumoniae serotype 4 (strain ATCC BAA-334 / TIGR4) protein is Tryptophan synthase alpha chain.